Reading from the N-terminus, the 504-residue chain is Sodium-coupled neutral amino acid transporter 3 (504 aa).

Asn74 is a glycosylation site (N-linked (GlcNAc...) asparagine). The next 5 membrane-spanning stretches (helical) occupy residues 83 to 103, 106 to 126, 144 to 164, 187 to 207, and 213 to 233; these read GILG…LFLL, VALL…VVGI, AAAL…LYII, MNGN…LALM, and LGYS…AVIY. Cys240 and Cys275 form a disulfide bridge. N-linked (GlcNAc...) asparagine glycans are attached at residues Asn247, Asn248, Asn252, and Asn323. A run of 5 helical transmembrane segments spans residues 324–344, 366–386, 408–428, 431–451, and 471–491; these read LSIA…YLTF, ILCV…IVLF, VLIA…APNI, IFGV…PAIF, and ALCF…FIII.

This sequence belongs to the amino acid/polyamine transporter 2 family.

Its subcellular location is the cell membrane. It localises to the basolateral cell membrane. The catalysed reaction is L-glutamine(out) + Na(+)(out) + H(+)(in) = L-glutamine(in) + Na(+)(in) + H(+)(out). It catalyses the reaction L-asparagine(out) + Na(+)(out) + H(+)(in) = L-asparagine(in) + Na(+)(in) + H(+)(out). It carries out the reaction L-histidine(out) + Na(+)(out) + H(+)(in) = L-histidine(in) + Na(+)(in) + H(+)(out). Symporter that cotransports specific neutral amino acids and sodium ions, coupled to an H(+) antiporter activity. Mainly participates in the glutamate-GABA-glutamine cycle in brain where it transports L-glutamine from astrocytes in the intercellular space for the replenishment of both neurotransmitters glutamate and gamma-aminobutyric acid (GABA) in neurons and also functions as the major influx transporter in ganglion cells mediating the uptake of glutamine. The transport activity is specific for L-glutamine, L-histidine and L-asparagine. The transport is electroneutral coupled to the cotransport of 1 Na(+) and the antiport of 1 H(+). The transport is pH dependent, saturable, Li(+) tolerant and functions in both direction depending on the concentration gradients of its substrates and cotransported ions. Also mediates an amino acid-gated H(+) conductance that is not stoichiometrically coupled to the amino acid transport but which influences the ionic gradients that drive the amino acid transport. In addition, may play a role in nitrogen metabolism, amino acid homeostasis, glucose metabolism and renal ammoniagenesis. The sequence is that of Sodium-coupled neutral amino acid transporter 3 from Homo sapiens (Human).